The chain runs to 44 residues: Thymosin beta (44 aa).

The disordered stretch occupies residues Met1 to Gly44. Ser2 carries the post-translational modification N-acetylserine.

In terms of tissue distribution, expressed in regenerating axons.

The protein resides in the cytoplasm. Its subcellular location is the cytoskeleton. Plays an important role in the organization of the cytoskeleton. Binds to and sequesters actin monomers (G actin) and therefore inhibits actin polymerization. May be involved in the regulation of structural plasticity in the CNS. In Aplysia californica (California sea hare), this protein is Thymosin beta.